Here is a 626-residue protein sequence, read N- to C-terminus: Phosphomethylpyrimidine synthase (626 aa).

Residues N237, M266, Y295, H331, 351 to 353 (SRG), 392 to 395 (DGLR), and E431 each bind substrate. H435 lines the Zn(2+) pocket. Position 458 (Y458) interacts with substrate. H499 serves as a coordination point for Zn(2+). Positions 579, 582, and 587 each coordinate [4Fe-4S] cluster.

This sequence belongs to the ThiC family. In terms of assembly, homodimer. [4Fe-4S] cluster serves as cofactor.

The catalysed reaction is 5-amino-1-(5-phospho-beta-D-ribosyl)imidazole + S-adenosyl-L-methionine = 4-amino-2-methyl-5-(phosphooxymethyl)pyrimidine + CO + 5'-deoxyadenosine + formate + L-methionine + 3 H(+). It participates in cofactor biosynthesis; thiamine diphosphate biosynthesis. In terms of biological role, catalyzes the synthesis of the hydroxymethylpyrimidine phosphate (HMP-P) moiety of thiamine from aminoimidazole ribotide (AIR) in a radical S-adenosyl-L-methionine (SAM)-dependent reaction. The protein is Phosphomethylpyrimidine synthase of Cupriavidus necator (strain ATCC 17699 / DSM 428 / KCTC 22496 / NCIMB 10442 / H16 / Stanier 337) (Ralstonia eutropha).